Reading from the N-terminus, the 379-residue chain is Mannitol-1-phosphate 5-dehydrogenase (379 aa).

An NAD(+)-binding site is contributed by 3–14; the sequence is AVHFGAGNIGRG.

This sequence belongs to the mannitol dehydrogenase family.

The catalysed reaction is D-mannitol 1-phosphate + NAD(+) = beta-D-fructose 6-phosphate + NADH + H(+). This chain is Mannitol-1-phosphate 5-dehydrogenase, found in Anoxybacillus flavithermus (strain DSM 21510 / WK1).